Consider the following 245-residue polypeptide: Endonuclease III (245 aa).

Residues 119-138 (MVDLFTLPGVGRKTANVILG) enclose the HhH domain. Positions 198, 205, 208, and 214 each coordinate [4Fe-4S] cluster.

It belongs to the Nth/MutY family. The cofactor is [4Fe-4S] cluster.

It catalyses the reaction 2'-deoxyribonucleotide-(2'-deoxyribose 5'-phosphate)-2'-deoxyribonucleotide-DNA = a 3'-end 2'-deoxyribonucleotide-(2,3-dehydro-2,3-deoxyribose 5'-phosphate)-DNA + a 5'-end 5'-phospho-2'-deoxyribonucleoside-DNA + H(+). DNA repair enzyme that has both DNA N-glycosylase activity and AP-lyase activity. The DNA N-glycosylase activity releases various damaged pyrimidines from DNA by cleaving the N-glycosidic bond, leaving an AP (apurinic/apyrimidinic) site. The AP-lyase activity cleaves the phosphodiester bond 3' to the AP site by a beta-elimination, leaving a 3'-terminal unsaturated sugar and a product with a terminal 5'-phosphate. This is Endonuclease III from Mycobacterium leprae (strain TN).